Here is an 80-residue protein sequence, read N- to C-terminus: Bowman-Birk type proteinase inhibitor (80 aa).

Cystine bridges form between Cys19/Cys70, Cys20/Cys35, Cys23/Cys66, Cys25/Cys33, Cys41/Cys47, Cys44/Cys59, and Cys49/Cys57.

As to quaternary structure, occurs as a monomer, dimer or trimer. The dimer may be the active form. Post-translationally, binds calcium, probably through His-3 to His-6.

Functionally, protease inhibitor with activity against cysteine, aspartic and serine proteases. Highest activity against serine proteases, in particular trypsin and trypsin-like proteases. This Phaseolus acutifolius (Tepary bean) protein is Bowman-Birk type proteinase inhibitor.